Here is a 273-residue protein sequence, read N- to C-terminus: Probable branched-chain-amino-acid aminotransferase (273 aa).

Residue Lys133 is modified to N6-(pyridoxal phosphate)lysine.

Belongs to the class-IV pyridoxal-phosphate-dependent aminotransferase family. Pyridoxal 5'-phosphate is required as a cofactor.

The catalysed reaction is L-leucine + 2-oxoglutarate = 4-methyl-2-oxopentanoate + L-glutamate. It carries out the reaction L-isoleucine + 2-oxoglutarate = (S)-3-methyl-2-oxopentanoate + L-glutamate. It catalyses the reaction L-valine + 2-oxoglutarate = 3-methyl-2-oxobutanoate + L-glutamate. It participates in amino-acid biosynthesis; L-isoleucine biosynthesis; L-isoleucine from 2-oxobutanoate: step 4/4. The protein operates within amino-acid biosynthesis; L-leucine biosynthesis; L-leucine from 3-methyl-2-oxobutanoate: step 4/4. Its pathway is amino-acid biosynthesis; L-valine biosynthesis; L-valine from pyruvate: step 4/4. Acts on leucine, isoleucine and valine. This Thermotoga maritima (strain ATCC 43589 / DSM 3109 / JCM 10099 / NBRC 100826 / MSB8) protein is Probable branched-chain-amino-acid aminotransferase (ilvE).